A 440-amino-acid polypeptide reads, in one-letter code: tRNA modification GTPase MnmE (440 aa).

Residues Arg-22, Glu-79, and Lys-118 each contribute to the (6S)-5-formyl-5,6,7,8-tetrahydrofolate site. The 153-residue stretch at 214 to 366 (GLIFTILGKP…LKTMLEAEAR (153 aa)) folds into the TrmE-type G domain. GTP is bound by residues 224–229 (NAGKSS), 243–249 (SSQPGTT), and 268–271 (DTAG). Residues Ser-228 and Thr-249 each coordinate Mg(2+). A (6S)-5-formyl-5,6,7,8-tetrahydrofolate-binding site is contributed by Lys-440.

Belongs to the TRAFAC class TrmE-Era-EngA-EngB-Septin-like GTPase superfamily. TrmE GTPase family. Homodimer. Heterotetramer of two MnmE and two MnmG subunits. K(+) is required as a cofactor.

It localises to the cytoplasm. Exhibits a very high intrinsic GTPase hydrolysis rate. Involved in the addition of a carboxymethylaminomethyl (cmnm) group at the wobble position (U34) of certain tRNAs, forming tRNA-cmnm(5)s(2)U34. This chain is tRNA modification GTPase MnmE, found in Granulibacter bethesdensis (strain ATCC BAA-1260 / CGDNIH1).